A 177-amino-acid chain; its full sequence is Large ribosomal subunit protein uL6 (177 aa).

Belongs to the universal ribosomal protein uL6 family. Part of the 50S ribosomal subunit.

Functionally, this protein binds to the 23S rRNA, and is important in its secondary structure. It is located near the subunit interface in the base of the L7/L12 stalk, and near the tRNA binding site of the peptidyltransferase center. The polypeptide is Large ribosomal subunit protein uL6 (Saccharophagus degradans (strain 2-40 / ATCC 43961 / DSM 17024)).